Reading from the N-terminus, the 154-residue chain is Ribonuclease H (154 aa).

The RNase H type-1 domain occupies 1-142 (MTKHVEIFTD…CDELARTAAE (142 aa)). Mg(2+) contacts are provided by Asp-10, Glu-48, Asp-70, and Asp-134.

It belongs to the RNase H family. As to quaternary structure, monomer. Mg(2+) serves as cofactor.

Its subcellular location is the cytoplasm. It catalyses the reaction Endonucleolytic cleavage to 5'-phosphomonoester.. Endonuclease that specifically degrades the RNA of RNA-DNA hybrids. The chain is Ribonuclease H from Vibrio campbellii (strain ATCC BAA-1116).